The primary structure comprises 913 residues: Alanine--tRNA ligase (913 aa).

Residues H600, H604, C703, and H707 each coordinate Zn(2+).

Belongs to the class-II aminoacyl-tRNA synthetase family. It depends on Zn(2+) as a cofactor.

The protein localises to the cytoplasm. The enzyme catalyses tRNA(Ala) + L-alanine + ATP = L-alanyl-tRNA(Ala) + AMP + diphosphate. Catalyzes the attachment of alanine to tRNA(Ala) in a two-step reaction: alanine is first activated by ATP to form Ala-AMP and then transferred to the acceptor end of tRNA(Ala). Also edits incorrectly charged Ser-tRNA(Ala) and Gly-tRNA(Ala) via its editing domain. In Methanothrix thermoacetophila (strain DSM 6194 / JCM 14653 / NBRC 101360 / PT) (Methanosaeta thermophila), this protein is Alanine--tRNA ligase.